Reading from the N-terminus, the 156-residue chain is Ribosome maturation factor RimP (156 aa).

This sequence belongs to the RimP family.

It is found in the cytoplasm. Required for maturation of 30S ribosomal subunits. The polypeptide is Ribosome maturation factor RimP (Treponema pallidum (strain Nichols)).